The sequence spans 316 residues: Holliday junction branch migration complex subunit RuvB (316 aa).

Residues 1–165 (MQITRPHNFE…FGYIARFVSY (165 aa)) form a large ATPase domain (RuvB-L) region. ATP-binding positions include R5, G46, K49, T50, S51, 112-114 (EDF), R155, Y165, and R202. T50 is a Mg(2+) binding site. Positions 166–236 (NAEDMKQIIR…IIKKTFKSLD (71 aa)) are small ATPAse domain (RuvB-S). A head domain (RuvB-H) region spans residues 239–316 (EYGLTKDHVE…TYLLKEKLIW (78 aa)). Residues K294 and R299 each coordinate DNA.

It belongs to the RuvB family. As to quaternary structure, homohexamer. Forms an RuvA(8)-RuvB(12)-Holliday junction (HJ) complex. HJ DNA is sandwiched between 2 RuvA tetramers; dsDNA enters through RuvA and exits via RuvB. An RuvB hexamer assembles on each DNA strand where it exits the tetramer. Each RuvB hexamer is contacted by two RuvA subunits (via domain III) on 2 adjacent RuvB subunits; this complex drives branch migration. In the full resolvosome a probable DNA-RuvA(4)-RuvB(12)-RuvC(2) complex forms which resolves the HJ.

Its subcellular location is the cytoplasm. It carries out the reaction ATP + H2O = ADP + phosphate + H(+). The RuvA-RuvB-RuvC complex processes Holliday junction (HJ) DNA during genetic recombination and DNA repair, while the RuvA-RuvB complex plays an important role in the rescue of blocked DNA replication forks via replication fork reversal (RFR). RuvA specifically binds to HJ cruciform DNA, conferring on it an open structure. The RuvB hexamer acts as an ATP-dependent pump, pulling dsDNA into and through the RuvAB complex. RuvB forms 2 homohexamers on either side of HJ DNA bound by 1 or 2 RuvA tetramers; 4 subunits per hexamer contact DNA at a time. Coordinated motions by a converter formed by DNA-disengaged RuvB subunits stimulates ATP hydrolysis and nucleotide exchange. Immobilization of the converter enables RuvB to convert the ATP-contained energy into a lever motion, pulling 2 nucleotides of DNA out of the RuvA tetramer per ATP hydrolyzed, thus driving DNA branch migration. The RuvB motors rotate together with the DNA substrate, which together with the progressing nucleotide cycle form the mechanistic basis for DNA recombination by continuous HJ branch migration. Branch migration allows RuvC to scan DNA until it finds its consensus sequence, where it cleaves and resolves cruciform DNA. The polypeptide is Holliday junction branch migration complex subunit RuvB (Mycoplasmopsis synoviae (strain 53) (Mycoplasma synoviae)).